A 1016-amino-acid polypeptide reads, in one-letter code: C2 domain-containing protein 5 (1016 aa).

One can recognise a C2 domain in the interval 1-109; sequence MPGKLKVKIV…EAATVISGWF (109 aa). The Ca(2+) site is built by Asp19, Asp26, Asp76, Asp78, Ser81, and Asp84. Ser197 carries the phosphoserine; by PKB/AKT2 modification. Phosphoserine occurs at positions 200 and 260. Residues 265–330 are disordered; it reads LKEIPFNEDP…SGSAGKEGGP (66 aa). A compositionally biased stretch (polar residues) spans 274–289; sequence PNPNTHSSGPSTPLKN. Over residues 290–318 the composition is skewed to low complexity; sequence QTYSFSPSKSYSRQSSSSDTDLSLTPKTG. Residues Ser293, Ser295, Ser304, Ser305, and Ser306 each carry the phosphoserine modification. Position 317 is a phosphothreonine (Thr317). A compositionally biased stretch (gly residues) spans 319–328; sequence MGSGSAGKEG. Ser323 bears the Phosphoserine mark. Thr601 is modified (phosphothreonine). Positions 636 to 668 are disordered; sequence VSEEMIGSPIPEPRQRSRLLRSQSESSDEVTEL. Ser643, Ser657, Ser659, Ser661, and Ser662 each carry phosphoserine. Thr666 is modified (phosphothreonine). Phosphoserine is present on residues Ser671, Ser817, and Ser869.

Ca(2+) serves as cofactor. Phosphorylated on Ser-197 by active myristoylated kinase AKT2; insulin-stimulated phosphorylation by AKT2 regulates SLC2A4/GLUT4 translocation into the plasma membrane. In terms of tissue distribution, expressed in liver, muscle and fat.

It is found in the cytoplasmic vesicle membrane. It localises to the cytoplasm. The protein localises to the cell cortex. The protein resides in the cell membrane. Its subcellular location is the cell projection. It is found in the ruffle. In terms of biological role, required for insulin-stimulated glucose transport and glucose transporter SLC2A4/GLUT4 translocation from intracellular glucose storage vesicle (GSV) to the plasma membrane (PM) in adipocytes. Binds phospholipid membranes in a calcium-dependent manner and is necessary for the optimal membrane fusion between SLC2A4/GLUT4 GSV and the PM. This chain is C2 domain-containing protein 5 (C2cd5), found in Mus musculus (Mouse).